Reading from the N-terminus, the 482-residue chain is Catalase (482 aa).

A compositionally biased stretch (polar residues) spans 1–11; it reads MNAMTNKTLTT. The disordered stretch occupies residues 1 to 21; it reads MNAMTNKTLTTAAGAPVADNN. Catalysis depends on residues His57 and Asn130. Tyr340 contributes to the heme binding site.

Belongs to the catalase family. Homodimer. The cofactor is heme.

The enzyme catalyses 2 H2O2 = O2 + 2 H2O. In terms of biological role, decomposes hydrogen peroxide into water and oxygen; serves to protect cells from the toxic effects of hydrogen peroxide. The sequence is that of Catalase (katA) from Bordetella bronchiseptica (strain ATCC BAA-588 / NCTC 13252 / RB50) (Alcaligenes bronchisepticus).